The following is a 206-amino-acid chain: MARYIGPKCKLSRREGTDLFLKSGARALDSKCNMETAPGQHGQRRGRLSDYGLQLREKQKVRRMYGVLEKQFRNYYKEAARIKGATGENLLQLLERRLDNVVYRMGFGSTRSEARQLVSHKAILVNGKAVNIPSYQVKPGDVVSIREKSKNQLRIKGSLELAAQRATLEWIEVDAAKMSGTFKSVPERTDLSPDINENLIVELYSK.

Residues 96–156 (RRLDNVVYRM…EKSKNQLRIK (61 aa)) enclose the S4 RNA-binding domain.

This sequence belongs to the universal ribosomal protein uS4 family. As to quaternary structure, part of the 30S ribosomal subunit. Contacts protein S5. The interaction surface between S4 and S5 is involved in control of translational fidelity.

One of the primary rRNA binding proteins, it binds directly to 16S rRNA where it nucleates assembly of the body of the 30S subunit. Its function is as follows. With S5 and S12 plays an important role in translational accuracy. This Hahella chejuensis (strain KCTC 2396) protein is Small ribosomal subunit protein uS4.